The primary structure comprises 272 residues: MARLAAFDMDGTLLMPDHHLGRETIATLSRLRERDITLTFATGRHVLEMRHILGTLSLDAYLITGNGTRIHSLEGDVLHRQDLDPQVADTVMHHAWDTRASMHVFNDNGWFTGQEIPALLQAHVYSGFRYQVIDIKSIPAHQVTKICFCGDHDDLIRLRIQLNEALEERAHLCFSAVDCLEVLPLGCNKGSALAVLSNHLGLSLADCMAFGDAMNDREMLGSVGRGLIMGNAMPQLIAALPHLSVIGHCGNQAVSHFLTHWLDNPHLPYSPE.

The Nucleophile role is filled by Asp8. Mg(2+) contacts are provided by Asp8, Asp10, and Asp212.

The protein belongs to the HAD-like hydrolase superfamily. Cof family. Mg(2+) serves as cofactor.

The enzyme catalyses 4-amino-2-methyl-5-(diphosphooxymethyl)pyrimidine + H2O = 4-amino-2-methyl-5-(phosphooxymethyl)pyrimidine + phosphate + H(+). Functionally, catalyzes the hydrolysis of 4-amino-2-methyl-5-hydroxymethylpyrimidine pyrophosphate (HMP-PP) to 4-amino-2-methyl-5-hydroxymethylpyrimidine phosphate (HMP-P). This Salmonella typhi protein is HMP-PP phosphatase.